The primary structure comprises 406 residues: Sensor histidine kinase YxjM (406 aa).

At 1 to 13 (MNGQTPARHYYKK) the chain is on the cytoplasmic side. A helical membrane pass occupies residues 14–34 (LVPSLILILNCIQFLSHPTKA). The Extracellular segment spans residues 35–36 (DP). A helical transmembrane segment spans residues 37 to 57 (ILLAFVFAVYLAFIWIIPYVA). Residue Ser-58 is a topological domain, cytoplasmic. A run of 2 helical transmembrane segments spans residues 59 to 79 (TAVS…FWAV) and 80 to 100 (SGQE…YAAF). Arg-101 is a topological domain (cytoplasmic). A helical membrane pass occupies residues 102–122 (LPSRLSLIFTACLIGGNILLL). Residues 123-125 (SSQ) are Extracellular-facing. The chain crosses the membrane as a helical span at residues 126-146 (GGSLNTIISNISIMLGLYVLF). Residues 147-406 (SSMRFRREAR…TNKEQKDEQR (260 aa)) lie on the Cytoplasmic side of the membrane. The region spanning 209-396 (DIHDSIGHEL…KIELSLPLMT (188 aa)) is the Histidine kinase domain. His-211 carries the post-translational modification Phosphohistidine; by autocatalysis.

It is found in the cell membrane. It carries out the reaction ATP + protein L-histidine = ADP + protein N-phospho-L-histidine.. Functionally, probable member of the two-component regulatory system YxjM/YxjL. May activate YxjL by phosphorylation. This chain is Sensor histidine kinase YxjM (yxjM), found in Bacillus subtilis (strain 168).